Consider the following 285-residue polypeptide: Homeobox protein Hox-A4 (285 aa).

Disordered regions lie at residues 19–70 (PFEE…APRA) and 94–130 (ASPG…TTPA). The span at 27–41 (GGPGGGDGAVGGGPG) shows a compositional bias: gly residues. The span at 44 to 70 (RPQSAPHLPAPNPHAARQPPAYYAPRA) shows a compositional bias: low complexity. Residues 106-118 (GAHPSPAPQPPVP) are compositionally biased toward pro residues. Residues 159-164 (VYPWMK) carry the Antp-type hexapeptide motif. A DNA-binding region (homeobox) is located at residues 180–239 (PKRSRTAYTRQQVLELEKEFHFNRYLTRRRRIEIAHTLCLSERQVKIWFQNRRMKWKKDH). The disordered stretch occupies residues 238–285 (DHKLPNTKMRSSNTASAPAGPPGKAQTHSPHHHPHPLPGASTPIPSSI).

It belongs to the Antp homeobox family. Deformed subfamily.

The protein localises to the nucleus. Sequence-specific transcription factor which is part of a developmental regulatory system that provides cells with specific positional identities on the anterior-posterior axis. Binds to sites in the 5'-flanking sequence of its coding region with various affinities. The consensus sequences of the high and low affinity binding sites are 5'-TAATGA[CG]-3' and 5'-CTAATTTT-3'. This is Homeobox protein Hox-A4 (Hoxa4) from Mus musculus (Mouse).